Reading from the N-terminus, the 209-residue chain is tRNA (guanine-N(7)-)-methyltransferase (209 aa).

Residues D35, E60, N87, and D113 each contribute to the S-adenosyl-L-methionine site. Residue D113 is part of the active site. K117 and D149 together coordinate substrate.

Belongs to the class I-like SAM-binding methyltransferase superfamily. TrmB family.

It catalyses the reaction guanosine(46) in tRNA + S-adenosyl-L-methionine = N(7)-methylguanosine(46) in tRNA + S-adenosyl-L-homocysteine. Its pathway is tRNA modification; N(7)-methylguanine-tRNA biosynthesis. In terms of biological role, catalyzes the formation of N(7)-methylguanine at position 46 (m7G46) in tRNA. The polypeptide is tRNA (guanine-N(7)-)-methyltransferase (Prochlorococcus marinus (strain MIT 9515)).